Reading from the N-terminus, the 188-residue chain is Elongation factor P (188 aa).

It belongs to the elongation factor P family.

Its subcellular location is the cytoplasm. The protein operates within protein biosynthesis; polypeptide chain elongation. Involved in peptide bond synthesis. Stimulates efficient translation and peptide-bond synthesis on native or reconstituted 70S ribosomes in vitro. Probably functions indirectly by altering the affinity of the ribosome for aminoacyl-tRNA, thus increasing their reactivity as acceptors for peptidyl transferase. The chain is Elongation factor P from Methylobacterium sp. (strain 4-46).